Here is a 360-residue protein sequence, read N- to C-terminus: Histidinol-phosphate aminotransferase (360 aa).

Lys-218 carries the N6-(pyridoxal phosphate)lysine modification.

This sequence belongs to the class-II pyridoxal-phosphate-dependent aminotransferase family. Histidinol-phosphate aminotransferase subfamily. Homodimer. Requires pyridoxal 5'-phosphate as cofactor.

It carries out the reaction L-histidinol phosphate + 2-oxoglutarate = 3-(imidazol-4-yl)-2-oxopropyl phosphate + L-glutamate. The protein operates within amino-acid biosynthesis; L-histidine biosynthesis; L-histidine from 5-phospho-alpha-D-ribose 1-diphosphate: step 7/9. This chain is Histidinol-phosphate aminotransferase, found in Pelagibacter ubique (strain HTCC1062).